The primary structure comprises 178 residues: Stathmin-2-A (178 aa).

Residues 38–178 (DDMEIKQLNK…RNKEQLELSG (141 aa)) enclose the SLD domain. A coiled-coil region spans residues 75–178 (KKKDVSLGEI…RNKEQLELSG (104 aa)).

Belongs to the stathmin family. In terms of tissue distribution, nervous tissue.

It is found in the cytoplasm. The protein resides in the membrane. Its subcellular location is the cell projection. The protein localises to the lamellipodium. The polypeptide is Stathmin-2-A (stmn2-a) (Xenopus laevis (African clawed frog)).